Consider the following 140-residue polypeptide: Fatty acid-binding protein 12 (140 aa).

A fatty acid contacts are provided by residues Arg-107 and 127-129; that span reads RTY.

This sequence belongs to the calycin superfamily. Fatty-acid binding protein (FABP) family. As to expression, expressed in a number of retinoblastoma cell lines.

May play a role in lipid transport. The polypeptide is Fatty acid-binding protein 12 (FABP12) (Homo sapiens (Human)).